The chain runs to 238 residues: Uridylate kinase (238 aa).

12-15 is a binding site for ATP; it reads KLSG. Gly-54 provides a ligand contact to UMP. Residues Gly-55 and Arg-59 each contribute to the ATP site. UMP contacts are provided by residues Asp-74 and 135-142; that span reads VGAPYFTT. Positions 162, 168, and 171 each coordinate ATP.

The protein belongs to the UMP kinase family. In terms of assembly, homohexamer.

Its subcellular location is the cytoplasm. It carries out the reaction UMP + ATP = UDP + ADP. Its pathway is pyrimidine metabolism; CTP biosynthesis via de novo pathway; UDP from UMP (UMPK route): step 1/1. With respect to regulation, inhibited by UTP. Functionally, catalyzes the reversible phosphorylation of UMP to UDP. The polypeptide is Uridylate kinase (Erythrobacter litoralis (strain HTCC2594)).